We begin with the raw amino-acid sequence, 241 residues long: Sugar fermentation stimulation protein homolog (241 aa).

It belongs to the SfsA family.

This chain is Sugar fermentation stimulation protein homolog, found in Halorhodospira halophila (strain DSM 244 / SL1) (Ectothiorhodospira halophila (strain DSM 244 / SL1)).